The sequence spans 181 residues: MAINDQNLIWVDLEMTGLDPETHKIIEIASIVTDAQLNILAEGPVIAIHQPEEELAKMDNWCTNTHTNSGLVARVQESKYDEEAAIAETIAFLEQWVPKGVSPICGNSIGQDRRFLYKHMPRLEEYFHYRYVDVSTIKELARRWKPEVLDGFTKAGTHLALDDIRESIAELKYYRQHIFTI.

The region spanning 8–171 (LIWVDLEMTG…DDIRESIAEL (164 aa)) is the Exonuclease domain. The active site involves Tyr129.

It belongs to the oligoribonuclease family.

The protein resides in the cytoplasm. In terms of biological role, 3'-to-5' exoribonuclease specific for small oligoribonucleotides. The sequence is that of Oligoribonuclease from Aliivibrio fischeri (strain ATCC 700601 / ES114) (Vibrio fischeri).